A 204-amino-acid polypeptide reads, in one-letter code: Methylthioribulose-1-phosphate dehydratase (204 aa).

Residues H94 and H96 each coordinate Zn(2+).

The protein belongs to the aldolase class II family. MtnB subfamily. The cofactor is Zn(2+).

It catalyses the reaction 5-(methylsulfanyl)-D-ribulose 1-phosphate = 5-methylsulfanyl-2,3-dioxopentyl phosphate + H2O. It functions in the pathway amino-acid biosynthesis; L-methionine biosynthesis via salvage pathway; L-methionine from S-methyl-5-thio-alpha-D-ribose 1-phosphate: step 2/6. Functionally, catalyzes the dehydration of methylthioribulose-1-phosphate (MTRu-1-P) into 2,3-diketo-5-methylthiopentyl-1-phosphate (DK-MTP-1-P). The protein is Methylthioribulose-1-phosphate dehydratase of Pseudomonas savastanoi pv. phaseolicola (strain 1448A / Race 6) (Pseudomonas syringae pv. phaseolicola (strain 1448A / Race 6)).